The sequence spans 448 residues: Squalene synthase ERG9 (448 aa).

Residues 420-440 form a helical membrane-spanning segment; that stretch reads RIEPGNFNCNVVLFGIGALIL.

The protein belongs to the phytoene/squalene synthase family. The cofactor is Mg(2+).

It is found in the endoplasmic reticulum membrane. Its subcellular location is the microsome. The catalysed reaction is 2 (2E,6E)-farnesyl diphosphate + NADPH + H(+) = squalene + 2 diphosphate + NADP(+). It catalyses the reaction 2 (2E,6E)-farnesyl diphosphate + NADH + H(+) = squalene + 2 diphosphate + NAD(+). Its pathway is terpene metabolism; lanosterol biosynthesis; lanosterol from farnesyl diphosphate: step 1/3. Squalene synthase; part of the third module of ergosterol biosynthesis pathway that includes the late steps of the pathway. ERG9 produces squalene from 2 farnesyl pyrophosphate moieties. The third module or late pathway involves the ergosterol synthesis itself through consecutive reactions that mainly occur in the endoplasmic reticulum (ER) membrane. Firstly, the squalene synthase ERG9 catalyzes the condensation of 2 farnesyl pyrophosphate moieties to form squalene, which is the precursor of all steroids. Squalene synthase is crucial for balancing the incorporation of farnesyl diphosphate (FPP) into sterol and nonsterol isoprene synthesis. Secondly, the squalene epoxidase ERG1 catalyzes the stereospecific oxidation of squalene to (S)-2,3-epoxysqualene, which is considered to be a rate-limiting enzyme in steroid biosynthesis. Then, the lanosterol synthase ERG7 catalyzes the cyclization of (S)-2,3 oxidosqualene to lanosterol, a reaction that forms the sterol core. In the next steps, lanosterol is transformed to zymosterol through a complex process involving various demethylation, reduction and desaturation reactions. The lanosterol 14-alpha-demethylase ERG11 (also known as CYP51) catalyzes C14-demethylation of lanosterol to produce 4,4'-dimethyl cholesta-8,14,24-triene-3-beta-ol, which is critical for ergosterol biosynthesis. The C-14 reductase ERG24 reduces the C14=C15 double bond of 4,4-dimethyl-cholesta-8,14,24-trienol to produce 4,4-dimethyl-cholesta-8,24-dienol. 4,4-dimethyl-cholesta-8,24-dienol is substrate of the C-4 demethylation complex ERG25-ERG26-ERG27 in which ERG25 catalyzes the three-step monooxygenation required for the demethylation of 4,4-dimethyl and 4alpha-methylsterols, ERG26 catalyzes the oxidative decarboxylation that results in a reduction of the 3-beta-hydroxy group at the C-3 carbon to an oxo group, and ERG27 is responsible for the reduction of the keto group on the C-3. ERG28 has a role as a scaffold to help anchor ERG25, ERG26 and ERG27 to the endoplasmic reticulum and ERG29 regulates the activity of the iron-containing C4-methylsterol oxidase ERG25. Then, the sterol 24-C-methyltransferase ERG6 catalyzes the methyl transfer from S-adenosyl-methionine to the C-24 of zymosterol to form fecosterol. The C-8 sterol isomerase ERG2 catalyzes the reaction which results in unsaturation at C-7 in the B ring of sterols and thus converts fecosterol to episterol. The sterol-C5-desaturase ERG3 then catalyzes the introduction of a C-5 double bond in the B ring to produce 5-dehydroepisterol. The C-22 sterol desaturase ERG5 further converts 5-dehydroepisterol into ergosta-5,7,22,24(28)-tetraen-3beta-ol by forming the C-22(23) double bond in the sterol side chain. Finally, ergosta-5,7,22,24(28)-tetraen-3beta-ol is substrate of the C-24(28) sterol reductase ERG4 to produce ergosterol. This chain is Squalene synthase ERG9, found in Candida albicans (Yeast).